Here is a 233-residue protein sequence, read N- to C-terminus: Purine nucleoside phosphorylase DeoD-type (233 aa).

His-4 contacts a purine D-ribonucleoside. Phosphate-binding positions include Gly-20, Arg-24, Arg-43, and 87–90; that span reads RVGT. A purine D-ribonucleoside-binding positions include 178–180 and 202–203; these read EME and SD. The active-site Proton donor is the Asp-203.

This sequence belongs to the PNP/UDP phosphorylase family. Homohexamer; trimer of homodimers.

It catalyses the reaction a purine D-ribonucleoside + phosphate = a purine nucleobase + alpha-D-ribose 1-phosphate. It carries out the reaction a purine 2'-deoxy-D-ribonucleoside + phosphate = a purine nucleobase + 2-deoxy-alpha-D-ribose 1-phosphate. In terms of biological role, catalyzes the reversible phosphorolytic breakdown of the N-glycosidic bond in the beta-(deoxy)ribonucleoside molecules, with the formation of the corresponding free purine bases and pentose-1-phosphate. The protein is Purine nucleoside phosphorylase DeoD-type of Listeria monocytogenes serotype 4b (strain CLIP80459).